Reading from the N-terminus, the 580-residue chain is MPSRPLIQLLDTTTINQIAAGEVIENSISVVKELVENALDAGADEIEVETLGGGQGLIVVKDNGCGMSAEDVTLALKRHATSKIGEFSDIFSLSSFGFRGEALPAIASISKMEILSCPRIGEGSRTIIHGGEIIASEAKPRQLGTTISIDSLFYNVPVRRGFQKSPQADRIAMRKLLENRILSIEGVGWSWVSERQQEFHILKHRGFAERVGFVMGEGFMQEALRVDSGERPVCVRGFLGSPGFHRPTRSGQRVFINDRPVDSVFISKQIREAYSMLLPPQRHPVFVLKLYLPPEWCDFNVHPQKTEVRILKEEFVGEFLSESIGEVLARPQESSVSEKTIFSLPALRFFDEHLAERSSVEPLESISLPELSIPPKVPLPFLDKGQDIPTTDGQMQIDWGVSQEVRFLTSLGKIVLAEDSEGVHAIFTEAARKHLFYLALTENQQYNYKSQSFLVPLCLEVTPQEGIFLSSHVEDFKQLGIELSQMGPCIFAIDSAPTFIGEEELKSWILFLAAESHAKVDRKAVALLIKETLTQTVFCKTLRPFDISWLSLLWQIGKPEKAFDGTQIRRLVLDEDFIKE.

The protein belongs to the DNA mismatch repair MutL/HexB family.

In terms of biological role, this protein is involved in the repair of mismatches in DNA. It is required for dam-dependent methyl-directed DNA mismatch repair. May act as a 'molecular matchmaker', a protein that promotes the formation of a stable complex between two or more DNA-binding proteins in an ATP-dependent manner without itself being part of a final effector complex. This chain is DNA mismatch repair protein MutL, found in Chlamydia felis (strain Fe/C-56) (Chlamydophila felis).